We begin with the raw amino-acid sequence, 267 residues long: MKSSESAAATASERRAETFQHKLEQFNPGIVWLDPQGHVSAFNDVALHILGPAGEQSLGVAQDHLFGIDVVQLHPEKSRDKLRFLLQSRDAGGCPVRSPPPVAMMINIPDRILMIKVSKMTGAAGTCGSCMIFYDVTDLTTEPSSQPAGASVPAPRRLFKIPVYRKSRVILIDLKDIVRFQGDGHYTTIVTKDERYLSNLSLADLELRLDSSVYLRVHRSHIVSLPYAVELVKLDESVNLVMDDAEQTQVPVSRSRTAQLKELLGVV.

The region spanning 15 to 86 (RAETFQHKLE…KSRDKLRFLL (72 aa)) is the PAS domain. Heme is bound by residues histidine 74 and methionine 104. Residues 161-266 (IPVYRKSRVI…TAQLKELLGV (106 aa)) form the HTH LytTR-type domain.

Heme serves as cofactor.

Its subcellular location is the cytoplasm. Its function is as follows. One-component, b-type heme-containing aerobic sensor and transcriptional regulator that responds to CO by activating the expression of the oxidation operon cox. In Paraburkholderia xenovorans (strain LB400), this protein is Heme-containing CO-sensing transcriptional regulator RcoM 2 (rcoM2).